Here is a 238-residue protein sequence, read N- to C-terminus: MTIQAKPSSSISYDSTTYGTAPGLDIKEFQIIEDWNGRPASAWSVQRIGLLQSKIERYTYNIYHNNKYGKHNLSKLIPGHALIQFANETFGYDGWRMDVIDVEARECQPFTAVNNGENTNTSEVKYTVVAEAQVKVTLKDGTNTQCGGLGRITLSSRGECYNRSKKEAVGDALKKALLSFEKIILDYETKITNNYYVDGLYGSKKIKNEANTNYNLLSATNSKPTFIKLEDAKGTHIK.

Belongs to the RAD52 family. In terms of assembly, interacts with RAD51 and RAD52.

The protein localises to the nucleus. Involved in the repair of double-strand breaks in DNA during vegetative growth via recombination and single-strand annealing. Anneals complementary single-stranded DNA. In Saccharomyces cerevisiae (strain ATCC 204508 / S288c) (Baker's yeast), this protein is DNA repair protein RAD59 (RAD59).